Consider the following 470-residue polypeptide: Argininosuccinate lyase (470 aa).

This sequence belongs to the lyase 1 family. Argininosuccinate lyase subfamily.

It is found in the cytoplasm. The catalysed reaction is 2-(N(omega)-L-arginino)succinate = fumarate + L-arginine. It participates in amino-acid biosynthesis; L-arginine biosynthesis; L-arginine from L-ornithine and carbamoyl phosphate: step 3/3. This is Argininosuccinate lyase from Mycobacterium sp. (strain JLS).